Reading from the N-terminus, the 385-residue chain is Probable endopeptidase MT2245 (385 aa).

Over residues 235–257 (AALPPGAPPGDGPAPGVAPPPGG) the composition is skewed to pro residues. The tract at residues 235-268 (AALPPGAPPGDGPAPGVAPPPGGMPGLPFVQPDG) is disordered. A NlpC/P60 domain is found at 270-385 (GGDRTAVVQA…SGPIYDARRY (116 aa)). Cysteine 300 acts as the Nucleophile in catalysis. Residue histidine 348 is the Proton acceptor of the active site. Histidine 360 is a catalytic residue.

It belongs to the peptidase C40 family.

The polypeptide is Probable endopeptidase MT2245 (Mycobacterium tuberculosis (strain CDC 1551 / Oshkosh)).